Reading from the N-terminus, the 198-residue chain is Recombination protein RecR (198 aa).

The segment at 57 to 72 (CSVCGRLTDDDPCIIC) adopts a C4-type zinc-finger fold. The Toprim domain maps to 80–175 (TKILVVEDSK…KVTRLARGLA (96 aa)).

The protein belongs to the RecR family.

Functionally, may play a role in DNA repair. It seems to be involved in an RecBC-independent recombinational process of DNA repair. It may act with RecF and RecO. In Streptococcus thermophilus (strain CNRZ 1066), this protein is Recombination protein RecR.